Consider the following 427-residue polypeptide: Serine--tRNA ligase (427 aa).

Thr-231 to Glu-233 contributes to the L-serine binding site. ATP is bound by residues Arg-262–Glu-264 and Val-278. Residue Glu-285 coordinates L-serine. Residue Glu-349–Ser-352 coordinates ATP. An L-serine-binding site is contributed by Ser-384.

Belongs to the class-II aminoacyl-tRNA synthetase family. Type-1 seryl-tRNA synthetase subfamily. As to quaternary structure, homodimer. The tRNA molecule binds across the dimer.

The protein localises to the cytoplasm. It catalyses the reaction tRNA(Ser) + L-serine + ATP = L-seryl-tRNA(Ser) + AMP + diphosphate + H(+). The catalysed reaction is tRNA(Sec) + L-serine + ATP = L-seryl-tRNA(Sec) + AMP + diphosphate + H(+). It participates in aminoacyl-tRNA biosynthesis; selenocysteinyl-tRNA(Sec) biosynthesis; L-seryl-tRNA(Sec) from L-serine and tRNA(Sec): step 1/1. In terms of biological role, catalyzes the attachment of serine to tRNA(Ser). Is also able to aminoacylate tRNA(Sec) with serine, to form the misacylated tRNA L-seryl-tRNA(Sec), which will be further converted into selenocysteinyl-tRNA(Sec). The sequence is that of Serine--tRNA ligase from Chlamydia pneumoniae (Chlamydophila pneumoniae).